The chain runs to 145 residues: uncharacterized protein (145 aa).

The segment at 37 to 123 is disordered; sequence GKGTNTAKSS…MDREASYFAP (87 aa). The span at 38–63 shows a compositional bias: polar residues; it reads KGTNTAKSSGGNNGTNLNAKRSNTTQ.

This is an uncharacterized protein from Caenorhabditis elegans.